The following is a 282-amino-acid chain: UPF0294 protein VIBHAR_03217 (282 aa).

The protein belongs to the UPF0294 family.

It localises to the cytoplasm. The polypeptide is UPF0294 protein VIBHAR_03217 (Vibrio campbellii (strain ATCC BAA-1116)).